A 269-amino-acid polypeptide reads, in one-letter code: Bifunctional protein FolD (269 aa).

NADP(+) contacts are provided by residues 149 to 151 and valine 215; that span reads GLG.

It belongs to the tetrahydrofolate dehydrogenase/cyclohydrolase family. As to quaternary structure, homodimer.

It catalyses the reaction (6R)-5,10-methylene-5,6,7,8-tetrahydrofolate + NADP(+) = (6R)-5,10-methenyltetrahydrofolate + NADPH. It carries out the reaction (6R)-5,10-methenyltetrahydrofolate + H2O = (6R)-10-formyltetrahydrofolate + H(+). Its pathway is one-carbon metabolism; tetrahydrofolate interconversion. Functionally, catalyzes the oxidation of 5,10-methylenetetrahydrofolate to 5,10-methenyltetrahydrofolate and then the hydrolysis of 5,10-methenyltetrahydrofolate to 10-formyltetrahydrofolate. The chain is Bifunctional protein FolD from Mycoplasma pneumoniae (strain ATCC 29342 / M129 / Subtype 1) (Mycoplasmoides pneumoniae).